Reading from the N-terminus, the 196-residue chain is RNA pyrophosphohydrolase (196 aa).

One can recognise a Nudix hydrolase domain in the interval 6-149; it reads GYRPNVGIVI…KRDVYRKVMK (144 aa). Positions 38–59 match the Nudix box motif; the sequence is GGINDNESAEQAMYRELHEEVG.

This sequence belongs to the Nudix hydrolase family. RppH subfamily. Requires a divalent metal cation as cofactor.

In terms of biological role, accelerates the degradation of transcripts by removing pyrophosphate from the 5'-end of triphosphorylated RNA, leading to a more labile monophosphorylated state that can stimulate subsequent ribonuclease cleavage. This chain is RNA pyrophosphohydrolase, found in Haemophilus influenzae (strain ATCC 51907 / DSM 11121 / KW20 / Rd).